A 91-amino-acid polypeptide reads, in one-letter code: DNA-binding protein HRL18 (91 aa).

Belongs to the bacterial histone-like protein family.

Its function is as follows. Histone-like DNA-binding protein which is capable of wrapping DNA to stabilize it, and thus to prevent its denaturation under extreme environmental conditions. The sequence is that of DNA-binding protein HRL18 from Rhizobium leguminosarum.